The primary structure comprises 849 residues: Rho guanine nucleotide exchange factor 15 (849 aa).

3 disordered regions span residues Met1–Pro146, Gly159–Pro202, and Leu277–Glu308. A compositionally biased stretch (basic residues) spans Arg18 to Pro31. The segment covering Gln48 to Thr59 has biased composition (polar residues). The span at Pro65–Pro110 shows a compositional bias: low complexity. Ser107 and Ser109 each carry phosphoserine. Residues Glu111–Pro123 are compositionally biased toward pro residues. A compositionally biased stretch (polar residues) spans Ala164–Val180. The residue at position 361 (Tyr361) is a Phosphotyrosine; by EPHB2. In terms of domain architecture, DH spans Arg425–Glu609. Composition is skewed to polar residues over residues Cys771–Glu786 and Ser840–Pro849. 2 disordered regions span residues Cys771–Lys803 and Gly819–Pro849.

As to quaternary structure, interacts with EPHA4. Interacts with EPHB2. Post-translationally, phosphorylated on tyrosine residues upon EFNA1 stimulation. EPHB2-dependent phosphorylation at Tyr-361 triggers UBE3A-mediated ubiquitination. In terms of processing, ubiquitinated; UBE3A-mediated ubiquitination and degradation by the proteasome promotes EFNB1-dependent synapse formation. As to expression, at P12, expressed is detected in the CA1 region and the dentate gyrus of the hippocampus.

Its subcellular location is the cell projection. The protein resides in the dendrite. In terms of biological role, specific GEF for RhoA activation. Does not activate RAC1 or CDC42. Regulates vascular smooth muscle contractility. Negatively regulates excitatory synapse development by suppressing the synapse-promoting activity of EPHB2. This Mus musculus (Mouse) protein is Rho guanine nucleotide exchange factor 15 (Arhgef15).